Here is a 1705-residue protein sequence, read N- to C-terminus: ALK tyrosine kinase receptor (1705 aa).

The signal sequence occupies residues 1-21 (MIARILYFFLWSAAFLPELQC). At 22–1035 (ASQRTADALT…SLSHLALGLS (1014 aa)) the chain is on the extracellular side. 2 N-linked (GlcNAc...) asparagine glycosylation sites follow: Asn-40 and Asn-48. The tract at residues 54-76 (RIKRKTLSVDFAVPSLLRYYLAL) is heparin-binding region. N-linked (GlcNAc...) asparagine glycosylation is found at Asn-124, Asn-259, Asn-334, Asn-434, Asn-442, Asn-458, Asn-484, Asn-578, Asn-590, and Asn-635. Positions 486 to 644 (SYCSFGREDC…NFTLSMECFL (159 aa)) constitute an MAM domain. A disulfide bridge connects residues Cys-694 and Cys-707. Asn-717 is a glycosylation site (N-linked (GlcNAc...) asparagine). Cys-788 and Cys-799 are oxidised to a cystine. 2 N-linked (GlcNAc...) asparagine glycosylation sites follow: Asn-808 and Asn-881. The segment at 842 to 892 (GGGRGYSSQSETPEEVMDRDPSIPGRNGKSGTAGGGGGWNDSAPVPQGGRP) is disordered. The cysteines at positions 903 and 921 are disulfide-linked. The N-linked (GlcNAc...) asparagine glycan is linked to Asn-979. Disulfide bonds link Cys-980–Cys-988 and Cys-983–Cys-997. The segment at 980–1016 (CSHCESGDCHETSEGMVCYCDEELTLAPDGVSCINST) is EGF-like. Asn-1014 is a glycosylation site (N-linked (GlcNAc...) asparagine). A helical transmembrane segment spans residues 1036–1056 (VGTSALIAALLLAVSGVMIMY). At 1057 to 1705 (RRKHTELQSI…KMEGHNATVL (649 aa)) the chain is on the cytoplasmic side. A Protein kinase domain is found at 1113-1389 (ISLTRGLGHG…IDYCLQDPDV (277 aa)). ATP-binding positions include 1119-1127 (LGHGAFGEV) and Lys-1147. Catalysis depends on Asp-1246, which acts as the Proton acceptor. Disordered regions lie at residues 1395 to 1499 (PVEY…GHVN), 1505 to 1524 (AHSSEKESRNRKPTNLWNPT), 1532 to 1557 (QQQKRQQVQAQRQTSGPRIPGEGQEQ), 1588 to 1613 (QQQQQQQQQQGLCRPLLPPPPPPAPT), and 1646 to 1681 (GLPMEPMQGPQLPPPHPGQQRPISLTRASGPEDSRP). A compositionally biased stretch (polar residues) spans 1484-1493 (KPSSTTSNAQ). Low complexity-rich tracts occupy residues 1532–1544 (QQQKRQQVQAQRQ) and 1588–1602 (QQQQQQQQQQGLCRP). The segment covering 1603–1613 (LLPPPPPPAPT) has biased composition (pro residues).

Belongs to the protein kinase superfamily. Tyr protein kinase family. Insulin receptor subfamily. As to quaternary structure, homodimer; homodimerizes upon binding to alkal ligands (alkal1, alkal2a or alkal2b). In terms of tissue distribution, highly expressed in the developing central nervous system: highly expressed in brain, with much lower expression in heart, caudal fin and testis.

It is found in the cell membrane. The catalysed reaction is L-tyrosyl-[protein] + ATP = O-phospho-L-tyrosyl-[protein] + ADP + H(+). Inhibited by ALK inhibitor TAE684. Receptor tyrosine kinase required for neurogenesis in the developing central nervous system. Following activation by alkal ligands (alkal1, alkal2a or alkal2b) at the cell surface, transduces an extracellular signal into an intracellular response. Ligand-binding to the extracellular domain induces tyrosine kinase activation, resulting in the activation of the mitogen-activated protein kinase (MAPK) pathway. Phosphorylates almost exclusively at the first tyrosine of the Y-x-x-x-Y-Y motif. This is ALK tyrosine kinase receptor from Danio rerio (Zebrafish).